Consider the following 472-residue polypeptide: Adenosylhomocysteinase (472 aa).

Substrate is bound by residues Thr-62, Asp-137, and Glu-197. NAD(+) is bound at residue 198 to 200 (TTT). Substrate is bound by residues Lys-227 and Asp-231. NAD(+)-binding positions include Asn-232, 261-266 (GYGDVG), Glu-284, Asn-319, 340-342 (IGH), and Asn-385.

It belongs to the adenosylhomocysteinase family. It depends on NAD(+) as a cofactor.

The protein resides in the cytoplasm. It catalyses the reaction S-adenosyl-L-homocysteine + H2O = L-homocysteine + adenosine. Its pathway is amino-acid biosynthesis; L-homocysteine biosynthesis; L-homocysteine from S-adenosyl-L-homocysteine: step 1/1. Its function is as follows. May play a key role in the regulation of the intracellular concentration of adenosylhomocysteine. This is Adenosylhomocysteinase from Bordetella petrii (strain ATCC BAA-461 / DSM 12804 / CCUG 43448).